We begin with the raw amino-acid sequence, 238 residues long: 1-(5-phosphoribosyl)-5-[(5-phosphoribosylamino)methylideneamino] imidazole-4-carboxamide isomerase (238 aa).

Residue aspartate 8 is the Proton acceptor of the active site. Aspartate 129 functions as the Proton donor in the catalytic mechanism.

It belongs to the HisA/HisF family.

The protein resides in the cytoplasm. The enzyme catalyses 1-(5-phospho-beta-D-ribosyl)-5-[(5-phospho-beta-D-ribosylamino)methylideneamino]imidazole-4-carboxamide = 5-[(5-phospho-1-deoxy-D-ribulos-1-ylimino)methylamino]-1-(5-phospho-beta-D-ribosyl)imidazole-4-carboxamide. It participates in amino-acid biosynthesis; L-histidine biosynthesis; L-histidine from 5-phospho-alpha-D-ribose 1-diphosphate: step 4/9. The protein is 1-(5-phosphoribosyl)-5-[(5-phosphoribosylamino)methylideneamino] imidazole-4-carboxamide isomerase of Clostridium novyi (strain NT).